A 692-amino-acid polypeptide reads, in one-letter code: Serine/threonine-protein phosphatase PP-Z1 (692 aa).

Disordered regions lie at residues 1-309 and 321-357; these read MGNS…DIEN and ENVN…PKKF. A lipid anchor (N-myristoyl glycine) is attached at G2. Low complexity-rich tracts occupy residues 32–41, 49–69, and 91–122; these read SHSVKSAKSN, SLPS…STPS, and SSSH…RRSS. S49 is modified (phosphoserine). Acidic residues predominate over residues 170–179; the sequence is LTDDDNDDKD. The residue at position 171 (T171) is a Phosphothreonine. Low complexity predominate over residues 190-204; that stretch reads RSSNSRPSSIRSGSV. A compositionally biased stretch (basic and acidic residues) spans 207-216; that stretch reads RKSDVTHEEP. Phosphoserine is present on residues S209 and S222. 2 stretches are compositionally biased toward polar residues: residues 217–229 and 251–267; these read NNGS…QENY and FGSD…NSPG. The residue at position 261 (T261) is a Phosphothreonine. S265 is modified (phosphoserine). Residues 280 to 289 show a composition bias toward low complexity; that stretch reads TSNSTSSLNH. Residues 291-303 show a composition bias toward basic and acidic residues; it reads SSRDIYPSKHISN. Positions 321–331 are enriched in polar residues; that stretch reads ENVNDKNNNIT. 4 residues coordinate Mn(2+): D419, H421, D447, and N479. H480 (proton donor) is an active-site residue. H528 and H603 together coordinate Mn(2+). Residues 672-692 are disordered; the sequence is LANQQQQMMETSITNDNESQQ. Polar residues predominate over residues 673–692; sequence ANQQQQMMETSITNDNESQQ. Phosphoserine is present on S690.

It belongs to the PPP phosphatase family. PP-Z subfamily. As to quaternary structure, interacts with SIS2 and VHS3, which regulate its activity. It depends on Mn(2+) as a cofactor.

The catalysed reaction is O-phospho-L-seryl-[protein] + H2O = L-seryl-[protein] + phosphate. It carries out the reaction O-phospho-L-threonyl-[protein] + H2O = L-threonyl-[protein] + phosphate. Its activity is regulated as follows. Inhibited by the regulatory subunits VHS3 and SIS2. Essential for the maintenance of cell size and integrity in response to osmotic stress. The polypeptide is Serine/threonine-protein phosphatase PP-Z1 (PPZ1) (Saccharomyces cerevisiae (strain ATCC 204508 / S288c) (Baker's yeast)).